A 156-amino-acid polypeptide reads, in one-letter code: Small ribosomal subunit protein uS7A/uS7B (156 aa).

This sequence belongs to the universal ribosomal protein uS7 family. In terms of assembly, part of the 30S ribosomal subunit. Contacts proteins S9 and S11.

One of the primary rRNA binding proteins, it binds directly to 16S rRNA where it nucleates assembly of the head domain of the 30S subunit. Is located at the subunit interface close to the decoding center, probably blocks exit of the E-site tRNA. This chain is Small ribosomal subunit protein uS7A/uS7B, found in Bartonella bacilliformis (strain ATCC 35685 / KC583 / Herrer 020/F12,63).